The following is a 391-amino-acid chain: Phosphoglycerate kinase (391 aa).

Residues 21–23, R36, 59–62, R113, and R146 contribute to the substrate site; these read DLN and HLGR. ATP is bound by residues K197, E319, and 345-348; that span reads GGDT.

Belongs to the phosphoglycerate kinase family. In terms of assembly, monomer.

Its subcellular location is the cytoplasm. It carries out the reaction (2R)-3-phosphoglycerate + ATP = (2R)-3-phospho-glyceroyl phosphate + ADP. It functions in the pathway carbohydrate degradation; glycolysis; pyruvate from D-glyceraldehyde 3-phosphate: step 2/5. The chain is Phosphoglycerate kinase from Stenotrophomonas maltophilia (strain K279a).